A 338-amino-acid chain; its full sequence is GTPase Obg (338 aa).

The 159-residue stretch at 1 to 159 (MKFIDEVTLF…AKLRLELKLM (159 aa)) folds into the Obg domain. In terms of domain architecture, OBG-type G spans 160-331 (ADVGLLGLPN…LLDEIARRLW (172 aa)). GTP contacts are provided by residues 166–173 (GLPNAGKS), 191–195 (FTTIK), 213–216 (DIPG), 283–286 (TKLD), and 312–314 (SSA). 2 residues coordinate Mg(2+): S173 and T193.

The protein belongs to the TRAFAC class OBG-HflX-like GTPase superfamily. OBG GTPase family. In terms of assembly, monomer. Mg(2+) is required as a cofactor.

Its subcellular location is the cytoplasm. Its function is as follows. An essential GTPase which binds GTP, GDP and possibly (p)ppGpp with moderate affinity, with high nucleotide exchange rates and a fairly low GTP hydrolysis rate. Plays a role in control of the cell cycle, stress response, ribosome biogenesis and in those bacteria that undergo differentiation, in morphogenesis control. This chain is GTPase Obg, found in Pelobacter propionicus (strain DSM 2379 / NBRC 103807 / OttBd1).